Consider the following 73-residue polypeptide: Translation initiation factor IF-1 (73 aa).

One can recognise an S1-like domain in the interval Met1–Lys72.

Belongs to the IF-1 family. As to quaternary structure, component of the 30S ribosomal translation pre-initiation complex which assembles on the 30S ribosome in the order IF-2 and IF-3, IF-1 and N-formylmethionyl-tRNA(fMet); mRNA recruitment can occur at any time during PIC assembly.

It is found in the cytoplasm. Functionally, one of the essential components for the initiation of protein synthesis. Stabilizes the binding of IF-2 and IF-3 on the 30S subunit to which N-formylmethionyl-tRNA(fMet) subsequently binds. Helps modulate mRNA selection, yielding the 30S pre-initiation complex (PIC). Upon addition of the 50S ribosomal subunit IF-1, IF-2 and IF-3 are released leaving the mature 70S translation initiation complex. The polypeptide is Translation initiation factor IF-1 (Salinibacter ruber (strain DSM 13855 / M31)).